Consider the following 252-residue polypeptide: Uracil-DNA glycosylase (252 aa).

The active-site Proton acceptor is the D78.

It belongs to the uracil-DNA glycosylase (UDG) superfamily. UNG family.

The protein resides in the cytoplasm. The catalysed reaction is Hydrolyzes single-stranded DNA or mismatched double-stranded DNA and polynucleotides, releasing free uracil.. Its function is as follows. Excises uracil residues from the DNA which can arise as a result of misincorporation of dUMP residues by DNA polymerase or due to deamination of cytosine. The polypeptide is Uracil-DNA glycosylase (Bordetella avium (strain 197N)).